We begin with the raw amino-acid sequence, 588 residues long: MSDKKTKGLEWQEKPLSDNERLKTDSNFLRGTILDDLKDGLTGGFKGDNFQLIRFHGMYEQDDRDIRAERLEEKLEPLKFMLLRCRLPGGIIKPYQWIEIDKFAREHTRYQSIRLTNRQTFQYHGVPKGKLQPMHRLLHSIGLDSIATAADMNRNVLCTSNPIESELHQQAYEFAKKISEHLLPRSRGYLDVWVDGKKVESSDDLLKIEDEPILGKTYLPRKFKTAVAIPPLNDVDVYANDLNFIAIQDENGQLCGFNVLVGGGLSFEHGNTKTYPNVAYSLGFVPLEHTLAAAEGVVKTQRDFGNRSDRKNARVRYTIQNMTLDGFRAEVERCMNIKFEPTRPYEFTERGDRIGWVKGIDNNWHLTLFIESGRITDKPEKPLMTGVLELAKVHKGDFRITANQNLIVANVAEQDKAQIEAIARQYGLIQEISKLRENAMSCVSLPTCPLAMAEAERVLPDFISELDKVLSKHNVADESIITRITGCPNGCGRAMLAEIGLVGKAIGRYNLHIGGDRAGLRISRLYKENITLQEIVNEIDQLVARWATERQTNEAFGDFVIRSNIIAPVVNAHIDFWDATKIIPTTII.

Residues cysteine 442, cysteine 448, cysteine 487, and cysteine 491 each coordinate [4Fe-4S] cluster. A siroheme-binding site is contributed by cysteine 491.

Belongs to the nitrite and sulfite reductase 4Fe-4S domain family. Alpha(8)-beta(8). The alpha component is a flavoprotein, the beta component is a hemoprotein. It depends on siroheme as a cofactor. The cofactor is [4Fe-4S] cluster.

It carries out the reaction hydrogen sulfide + 3 NADP(+) + 3 H2O = sulfite + 3 NADPH + 4 H(+). Its pathway is sulfur metabolism; hydrogen sulfide biosynthesis; hydrogen sulfide from sulfite (NADPH route): step 1/1. Functionally, component of the sulfite reductase complex that catalyzes the 6-electron reduction of sulfite to sulfide. This is one of several activities required for the biosynthesis of L-cysteine from sulfate. The polypeptide is Sulfite reductase [NADPH] hemoprotein beta-component (Actinobacillus pleuropneumoniae serotype 7 (strain AP76)).